Consider the following 212-residue polypeptide: NAD(P)H dehydrogenase (quinone) 3 (212 aa).

Residues 4-192 (MLVLYYSSYG…DGARFQGRHV (189 aa)) enclose the Flavodoxin-like domain. Residues 10–15 (SSYGHI) and 78–80 (TRF) each bind FMN. Residue Tyr12 coordinates NAD(+). Trp98 serves as a coordination point for substrate. Residues 113-119 (STGSQHG) and His134 contribute to the FMN site. The tract at residues 161 to 182 (YGASTLAEDENHRDRSPSANEL) is disordered.

Belongs to the WrbA family. Requires FMN as cofactor.

It catalyses the reaction a quinone + NADH + H(+) = a quinol + NAD(+). It carries out the reaction a quinone + NADPH + H(+) = a quinol + NADP(+). The protein is NAD(P)H dehydrogenase (quinone) 3 of Rhizobium meliloti (strain 1021) (Ensifer meliloti).